The sequence spans 518 residues: MTTSHASHPDRLLPADPGTRDIARRLLAHVEDLPIISPHGHLEASMFVKDEAFPDPTSLLISPDHYLTRMMHSAGVDLADLRVGGHEGKSAREAWRIFMSHWDLYAGTATGYWVEQEFEHVFGINAERLNVGTPEHADAIFDELTDILAKPDFRPRALAEQFNLEVLATTDDPLDDLADHKALADDPTFSPRVLPTFRPDAYTKMYNAGWAEKTTKLIDTAGDGKAGWEGYLQAMRNRRQYFINHGATSADHGLHDTDTTPLSHKDAQKILDKGLAGTATLAEMHAFEANTTYRFAEMSQEDGLVMTIHPGVYRNHSASAQKKFGADIGADIPFQMEFTNGLRPLLSDFGENKDLISDSSFNRWLRTVSLGSTQDADMAAASNLAANSKMARQNTRDILDAVSDGGVMLGRNGALVLGPVVGTLHIKFIAPLNKRVERVMYKTGLSEAAAAEQCALEDRLREEMAHALYQWNPGRDENYDLVINTGSMTYEQIVDLVVETYARKYPLHVRIIPNGKDQ.

Belongs to the metallo-dependent hydrolases superfamily. Uronate isomerase family.

It catalyses the reaction D-glucuronate = D-fructuronate. The catalysed reaction is aldehydo-D-galacturonate = keto-D-tagaturonate. It participates in carbohydrate metabolism; pentose and glucuronate interconversion. The protein is Uronate isomerase (uxaC) of Corynebacterium glutamicum (strain ATCC 13032 / DSM 20300 / JCM 1318 / BCRC 11384 / CCUG 27702 / LMG 3730 / NBRC 12168 / NCIMB 10025 / NRRL B-2784 / 534).